Consider the following 337-residue polypeptide: Neurogenic differentiation factor 6 (337 aa).

The disordered stretch occupies residues Leu43 to Lys82. A compositionally biased stretch (acidic residues) spans Glu54 to Asn71. The short motif at Arg80–Lys86 is the Nuclear localization signal element. One can recognise a bHLH domain in the interval Phe94–Leu146.

In terms of assembly, efficient DNA binding requires dimerization with another bHLH protein.

It is found in the nucleus. Its function is as follows. Activates E box-dependent transcription in collaboration with TCF3/E47. May be a trans-acting factor involved in the development and maintenance of the mammalian nervous system. Transactivates the promoter of its own gene. The sequence is that of Neurogenic differentiation factor 6 (NEUROD6) from Bos taurus (Bovine).